Consider the following 295-residue polypeptide: Ethanolamine ammonia-lyase small subunit (295 aa).

Adenosylcob(III)alamin-binding residues include Val207, Glu228, and Cys258.

It belongs to the EutC family. As to quaternary structure, the basic unit is a heterodimer which dimerizes to form tetramers. The heterotetramers trimerize; 6 large subunits form a core ring with 6 small subunits projecting outwards. Adenosylcob(III)alamin is required as a cofactor.

It localises to the bacterial microcompartment. It carries out the reaction ethanolamine = acetaldehyde + NH4(+). It functions in the pathway amine and polyamine degradation; ethanolamine degradation. Catalyzes the deamination of various vicinal amino-alcohols to oxo compounds. Allows this organism to utilize ethanolamine as the sole source of nitrogen and carbon in the presence of external vitamin B12. This Escherichia coli O7:K1 (strain IAI39 / ExPEC) protein is Ethanolamine ammonia-lyase small subunit.